A 481-amino-acid chain; its full sequence is Cysteine protease atg-4.1 (481 aa).

Cys-112 serves as the catalytic Nucleophile. Residues Asp-313 and His-315 contribute to the active site. Residues Asp-462–Ala-481 are disordered.

This sequence belongs to the peptidase C54 family.

It localises to the cytoplasm. It catalyses the reaction [protein]-C-terminal L-amino acid-glycyl-phosphatidylethanolamide + H2O = [protein]-C-terminal L-amino acid-glycine + a 1,2-diacyl-sn-glycero-3-phosphoethanolamine. Functionally, cysteine protease required for autophagy. Cleaves the C-terminal amino acid of ATG8 family proteins lgg-1, to reveal a C-terminal glycine. Exposure of the glycine at the C-terminus is essential for ATG8 proteins conjugation to phosphatidylethanolamine (PE) and insertion to membranes, which is necessary for autophagy. Its cleavage activity is functionally redundant to atg-4.2, but it cleaves lgg-1 precursors more efficiently than atg-4.2. Acts redundantly with atg-4.2 to promote the lgg-1 delipidation to release the protein from membranes, which facilitates multiple events during macroautophagy. Unlike atg-4.2 does not seem to be required for autophagosome maturation. The polypeptide is Cysteine protease atg-4.1 (Caenorhabditis elegans).